A 312-amino-acid chain; its full sequence is Malate dehydrogenase (312 aa).

NAD(+)-binding positions include 12–17 (GAGFTG) and Asp36. 2 residues coordinate substrate: Arg87 and Arg93. NAD(+)-binding positions include Asn100 and 123 to 125 (LTN). Asn125 lines the substrate pocket. Ser149 carries the post-translational modification Phosphoserine. Arg156 contributes to the substrate binding site. The active-site Proton acceptor is the His180.

The protein belongs to the LDH/MDH superfamily. MDH type 3 family.

The enzyme catalyses (S)-malate + NAD(+) = oxaloacetate + NADH + H(+). Functionally, catalyzes the reversible oxidation of malate to oxaloacetate. In Bacillus licheniformis (strain ATCC 14580 / DSM 13 / JCM 2505 / CCUG 7422 / NBRC 12200 / NCIMB 9375 / NCTC 10341 / NRRL NRS-1264 / Gibson 46), this protein is Malate dehydrogenase.